Here is a 669-residue protein sequence, read N- to C-terminus: tRNA 5-methylaminomethyl-2-thiouridine biosynthesis bifunctional protein MnmC (669 aa).

Residues 1–246 are tRNA (mnm(5)s(2)U34)-methyltransferase; that stretch reads MIKNANIHFN…KRSMLIGTLK (246 aa). The tract at residues 271–669 is FAD-dependent cmnm(5)s(2)U34 oxidoreductase; sequence IGGGIASSCI…IVRDLIRNKI (399 aa).

In the N-terminal section; belongs to the methyltransferase superfamily. tRNA (mnm(5)s(2)U34)-methyltransferase family. This sequence in the C-terminal section; belongs to the DAO family. It depends on FAD as a cofactor.

Its subcellular location is the cytoplasm. The catalysed reaction is 5-aminomethyl-2-thiouridine(34) in tRNA + S-adenosyl-L-methionine = 5-methylaminomethyl-2-thiouridine(34) in tRNA + S-adenosyl-L-homocysteine + H(+). Functionally, catalyzes the last two steps in the biosynthesis of 5-methylaminomethyl-2-thiouridine (mnm(5)s(2)U) at the wobble position (U34) in tRNA. Catalyzes the FAD-dependent demodification of cmnm(5)s(2)U34 to nm(5)s(2)U34, followed by the transfer of a methyl group from S-adenosyl-L-methionine to nm(5)s(2)U34, to form mnm(5)s(2)U34. In Pseudoalteromonas translucida (strain TAC 125), this protein is tRNA 5-methylaminomethyl-2-thiouridine biosynthesis bifunctional protein MnmC.